A 209-amino-acid chain; its full sequence is Uracil phosphoribosyltransferase (209 aa).

Residues Arg79, Arg104, and 131 to 139 contribute to the 5-phospho-alpha-D-ribose 1-diphosphate site; that span reads DPMLATGVS. Uracil-binding positions include Ile194 and 199-201; that span reads GDA. Asp200 is a 5-phospho-alpha-D-ribose 1-diphosphate binding site.

This sequence belongs to the UPRTase family. Mg(2+) serves as cofactor.

The enzyme catalyses UMP + diphosphate = 5-phospho-alpha-D-ribose 1-diphosphate + uracil. The protein operates within pyrimidine metabolism; UMP biosynthesis via salvage pathway; UMP from uracil: step 1/1. Its activity is regulated as follows. Allosterically activated by GTP. In terms of biological role, catalyzes the conversion of uracil and 5-phospho-alpha-D-ribose 1-diphosphate (PRPP) to UMP and diphosphate. The chain is Uracil phosphoribosyltransferase from Thermotoga petrophila (strain ATCC BAA-488 / DSM 13995 / JCM 10881 / RKU-1).